The chain runs to 150 residues: Large ribosomal subunit protein bL9 (150 aa).

It belongs to the bacterial ribosomal protein bL9 family.

Functionally, binds to the 23S rRNA. The polypeptide is Large ribosomal subunit protein bL9 (Paraburkholderia phymatum (strain DSM 17167 / CIP 108236 / LMG 21445 / STM815) (Burkholderia phymatum)).